The chain runs to 409 residues: Elongation factor Tu, chloroplastic (409 aa).

Residues 10-214 (KPHVNIGTIG…AVDTYIPTPE (205 aa)) form the tr-type G domain. The tract at residues 19-26 (GHVDHGKT) is G1. Residue 19 to 26 (GHVDHGKT) participates in GTP binding. Threonine 26 contacts Mg(2+). The interval 60-64 (GITIN) is G2. Positions 81 to 84 (DCPG) are G3. Residues 81 to 85 (DCPGH) and 136 to 139 (NKED) contribute to the GTP site. The G4 stretch occupies residues 136–139 (NKED). Residues 174–176 (SAL) are G5.

The protein belongs to the TRAFAC class translation factor GTPase superfamily. Classic translation factor GTPase family. EF-Tu/EF-1A subfamily.

It is found in the plastid. It localises to the chloroplast. The catalysed reaction is GTP + H2O = GDP + phosphate + H(+). In terms of biological role, GTP hydrolase that promotes the GTP-dependent binding of aminoacyl-tRNA to the A-site of ribosomes during protein biosynthesis. The sequence is that of Elongation factor Tu, chloroplastic (tufA) from Pyropia yezoensis (Susabi-nori).